The primary structure comprises 295 residues: 33 kDa chaperonin (295 aa).

Disulfide bonds link Cys-230–Cys-232 and Cys-264–Cys-267.

This sequence belongs to the HSP33 family. In terms of processing, under oxidizing conditions two disulfide bonds are formed involving the reactive cysteines. Under reducing conditions zinc is bound to the reactive cysteines and the protein is inactive.

The protein resides in the cytoplasm. In terms of biological role, redox regulated molecular chaperone. Protects both thermally unfolding and oxidatively damaged proteins from irreversible aggregation. Plays an important role in the bacterial defense system toward oxidative stress. In Ectopseudomonas mendocina (strain ymp) (Pseudomonas mendocina), this protein is 33 kDa chaperonin.